The primary structure comprises 155 residues: NADPH-dependent 7-cyano-7-deazaguanine reductase (155 aa).

Cys53 (thioimide intermediate) is an active-site residue. Catalysis depends on Asp60, which acts as the Proton donor. Residues 75 to 77 and 94 to 95 each bind substrate; these read VES and HE.

It belongs to the GTP cyclohydrolase I family. QueF type 1 subfamily.

The protein localises to the cytoplasm. The catalysed reaction is 7-aminomethyl-7-carbaguanine + 2 NADP(+) = 7-cyano-7-deazaguanine + 2 NADPH + 3 H(+). The protein operates within tRNA modification; tRNA-queuosine biosynthesis. Catalyzes the NADPH-dependent reduction of 7-cyano-7-deazaguanine (preQ0) to 7-aminomethyl-7-deazaguanine (preQ1). The sequence is that of NADPH-dependent 7-cyano-7-deazaguanine reductase from Brucella anthropi (strain ATCC 49188 / DSM 6882 / CCUG 24695 / JCM 21032 / LMG 3331 / NBRC 15819 / NCTC 12168 / Alc 37) (Ochrobactrum anthropi).